Reading from the N-terminus, the 83-residue chain is MANHKSAAKRAKQSEARRLRNKSTRSSMNTAVKKVRTAKEAGTDNATDLLNSAKSLIAKAAKKGVIHQNTAARKISRLTKSLG.

Over residues 1 to 11 (MANHKSAAKRA) the composition is skewed to basic residues. Residues 1-44 (MANHKSAAKRAKQSEARRLRNKSTRSSMNTAVKKVRTAKEAGTD) form a disordered region.

Belongs to the bacterial ribosomal protein bS20 family.

In terms of biological role, binds directly to 16S ribosomal RNA. This chain is Small ribosomal subunit protein bS20, found in Desulforapulum autotrophicum (strain ATCC 43914 / DSM 3382 / VKM B-1955 / HRM2) (Desulfobacterium autotrophicum).